A 323-amino-acid polypeptide reads, in one-letter code: Lipoyl synthase (323 aa).

Residues cysteine 69, cysteine 74, cysteine 80, cysteine 95, cysteine 99, cysteine 102, and serine 310 each contribute to the [4Fe-4S] cluster site. Residues 81–299 enclose the Radical SAM core domain; it reads WTHGTLTVMI…EAWGYELGFR (219 aa).

This sequence belongs to the radical SAM superfamily. Lipoyl synthase family. Requires [4Fe-4S] cluster as cofactor.

It is found in the cytoplasm. The enzyme catalyses [[Fe-S] cluster scaffold protein carrying a second [4Fe-4S](2+) cluster] + N(6)-octanoyl-L-lysyl-[protein] + 2 oxidized [2Fe-2S]-[ferredoxin] + 2 S-adenosyl-L-methionine + 4 H(+) = [[Fe-S] cluster scaffold protein] + N(6)-[(R)-dihydrolipoyl]-L-lysyl-[protein] + 4 Fe(3+) + 2 hydrogen sulfide + 2 5'-deoxyadenosine + 2 L-methionine + 2 reduced [2Fe-2S]-[ferredoxin]. The protein operates within protein modification; protein lipoylation via endogenous pathway; protein N(6)-(lipoyl)lysine from octanoyl-[acyl-carrier-protein]: step 2/2. In terms of biological role, catalyzes the radical-mediated insertion of two sulfur atoms into the C-6 and C-8 positions of the octanoyl moiety bound to the lipoyl domains of lipoate-dependent enzymes, thereby converting the octanoylated domains into lipoylated derivatives. In Thermus thermophilus (strain ATCC 27634 / DSM 579 / HB8), this protein is Lipoyl synthase.